Consider the following 723-residue polypeptide: Methionine--tRNA ligase (723 aa).

A 'HIGH' region motif is present at residues 11–21 (PYANGPIHAGH). 4 residues coordinate Zn(2+): cysteine 143, cysteine 146, cysteine 156, and cysteine 159. Positions 344-348 (KFSTS) match the 'KMSKS' region motif. Threonine 347 contacts ATP. Residues 623 to 723 (DFAKLDLRVG…KEVKLGAKVR (101 aa)) enclose the tRNA-binding domain.

Belongs to the class-I aminoacyl-tRNA synthetase family. MetG type 1 subfamily. Homodimer. Requires Zn(2+) as cofactor.

The protein resides in the cytoplasm. It catalyses the reaction tRNA(Met) + L-methionine + ATP = L-methionyl-tRNA(Met) + AMP + diphosphate. Its function is as follows. Is required not only for elongation of protein synthesis but also for the initiation of all mRNA translation through initiator tRNA(fMet) aminoacylation. This is Methionine--tRNA ligase from Pyrococcus horikoshii (strain ATCC 700860 / DSM 12428 / JCM 9974 / NBRC 100139 / OT-3).